The primary structure comprises 231 residues: Thymidylate kinase (231 aa).

10–17 contacts ATP; that stretch reads GGEGAGKT.

Belongs to the thymidylate kinase family.

It carries out the reaction dTMP + ATP = dTDP + ADP. Functionally, phosphorylation of dTMP to form dTDP in both de novo and salvage pathways of dTTP synthesis. The polypeptide is Thymidylate kinase (Acaryochloris marina (strain MBIC 11017)).